Reading from the N-terminus, the 1054-residue chain is Bifunctional cytochrome P450/NADPH--P450 reductase 2 (1054 aa).

The segment at 1 to 475 is cytochrome P450; the sequence is MKQASAIPQP…QADIKAETKP (475 aa). C403 contacts heme. The span at 462-480 shows a compositional bias: basic and acidic residues; the sequence is QRKEQADIKAETKPKETKP. Residues 462–482 form a disordered region; sequence QRKEQADIKAETKPKETKPKH. The NADPH--P450 reductase stretch occupies residues 476 to 1053; that stretch reads KETKPKHGTP…RRYVKDVWTG (578 aa). Residues 486–625 enclose the Flavodoxin-like domain; that stretch reads LLVLFGSNLG…HRESWENRFW (140 aa). FMN contacts are provided by residues 492–497, 539–542, 573–575, and 581–583; these read SNLGTA, SYNG, CGN, and TYQ. The region spanning 663–896 is the FAD-binding FR-type domain; it reads YGAFEGIVLE…RTPQSGFQMP (234 aa).

The protein in the N-terminal section; belongs to the cytochrome P450 family. Requires FAD as cofactor. It depends on FMN as a cofactor. Heme b serves as cofactor.

It is found in the cytoplasm. It carries out the reaction an organic molecule + reduced [NADPH--hemoprotein reductase] + O2 = an alcohol + oxidized [NADPH--hemoprotein reductase] + H2O + H(+). It catalyses the reaction 2 oxidized [cytochrome P450] + NADPH = 2 reduced [cytochrome P450] + NADP(+) + H(+). In terms of biological role, functions as a fatty acid monooxygenase. Catalyzes hydroxylation of a range of medium to long-chain fatty acids, with a preference for long-chain unsaturated and branched-chain fatty acids over saturated fatty acids. Hydroxylation of myristic acid occurs mainly at the omega-2 and omega-3 positions, in approximately equal proportions. Also displays a NADPH-dependent reductase activity in the C-terminal domain, which allows electron transfer from NADPH to the heme iron of the cytochrome P450 N-terminal domain. The sequence is that of Bifunctional cytochrome P450/NADPH--P450 reductase 2 from Bacillus subtilis (strain 168).